A 442-amino-acid polypeptide reads, in one-letter code: 3-phosphoshikimate 1-carboxyvinyltransferase (442 aa).

3-phosphoshikimate-binding residues include Lys-25, Ser-26, and Arg-30. Lys-25 lines the phosphoenolpyruvate pocket. The phosphoenolpyruvate site is built by Gly-97 and Arg-125. Ser-170, Gln-172, Asp-323, and Lys-350 together coordinate 3-phosphoshikimate. Gln-172 is a phosphoenolpyruvate binding site. Asp-323 acts as the Proton acceptor in catalysis. 2 residues coordinate phosphoenolpyruvate: Arg-354 and Arg-399.

This sequence belongs to the EPSP synthase family. Monomer.

Its subcellular location is the cytoplasm. The enzyme catalyses 3-phosphoshikimate + phosphoenolpyruvate = 5-O-(1-carboxyvinyl)-3-phosphoshikimate + phosphate. The protein operates within metabolic intermediate biosynthesis; chorismate biosynthesis; chorismate from D-erythrose 4-phosphate and phosphoenolpyruvate: step 6/7. In terms of biological role, catalyzes the transfer of the enolpyruvyl moiety of phosphoenolpyruvate (PEP) to the 5-hydroxyl of shikimate-3-phosphate (S3P) to produce enolpyruvyl shikimate-3-phosphate and inorganic phosphate. The protein is 3-phosphoshikimate 1-carboxyvinyltransferase of Bartonella henselae (strain ATCC 49882 / DSM 28221 / CCUG 30454 / Houston 1) (Rochalimaea henselae).